We begin with the raw amino-acid sequence, 469 residues long: RNA-editing ligase 1, mitochondrial (469 aa).

The N-terminal 44 residues, 1-44 (MQLQRLGAPLLKRLVGGCIRQSTAPIMPCVVVSGSGVFLTPVRT), are a transit peptide targeting the mitochondrion. ATP-binding positions include 59-61 (IEI), 86-92 (EKVHGTN), Arg-111, Glu-159, Phe-209, and 307-309 (KLR). Lys-87 (N6-AMP-lysine intermediate) is an active-site residue. Positions 450–469 (AAAQSEAIPPLSPAAPTKGE) are disordered.

The protein belongs to the RNA ligase 2 family. In terms of assembly, component of the RNA editing complex (editosome), a 1600 kDa complex composed of at least 20 proteins. Interacts with terminal uridylyltransferase MEAT1.

It localises to the mitochondrion. The enzyme catalyses ATP + (ribonucleotide)n-3'-hydroxyl + 5'-phospho-(ribonucleotide)m = (ribonucleotide)n+m + AMP + diphosphate.. Functionally, essential for RNA editing. RNA editing in kinetoplastid mitochondria inserts and deletes uridylates at multiple sites in pre-mRNAs as directed by guide RNAs. This is RNA-editing ligase 1, mitochondrial (REL1) from Trypanosoma brucei brucei.